The chain runs to 65 residues: UPF0434 protein BQ10150 (65 aa).

It belongs to the UPF0434 family.

This chain is UPF0434 protein BQ10150, found in Bartonella quintana (strain Toulouse) (Rochalimaea quintana).